The primary structure comprises 490 residues: Glycine--tRNA ligase (490 aa).

The substrate site is built by Arg-99 and Glu-163. Residues 195–197 (RNE), 205–210 (FRTREF), 282–283 (EL), and 326–329 (GLTR) each bind ATP. Residue 210 to 214 (FEQME) participates in substrate binding. 322–326 (EPAAG) lines the substrate pocket. The disordered stretch occupies residues 470–490 (PVEMGGEPWPESGVQEAGGLY).

Belongs to the class-II aminoacyl-tRNA synthetase family. In terms of assembly, homodimer.

The protein localises to the cytoplasm. It catalyses the reaction tRNA(Gly) + glycine + ATP = glycyl-tRNA(Gly) + AMP + diphosphate. Its function is as follows. Catalyzes the attachment of glycine to tRNA(Gly). The polypeptide is Glycine--tRNA ligase (Bifidobacterium longum (strain NCC 2705)).